The primary structure comprises 78 residues: Putative capsid protein ORF9 (78 aa).

Positions 1-29 (MIKLVLLVAAIAIFGTGFITVIINQFTSA) are cleaved as a signal peptide. A helical transmembrane segment spans residues 52–72 (VLFSHPLMLTISSLYIVGFIV).

It belongs to the plectrovirus ORF9 family. As to quaternary structure, homomultimerizes.

Its subcellular location is the virion. It localises to the host membrane. May self assemble to form a helical capsid wrapping up the viral genomic DNA. The virion assembly and budding take place at the host inner membrane. The polypeptide is Putative capsid protein ORF9 (Spiroplasma virus SpV1-C74 (SpV1)).